A 348-amino-acid polypeptide reads, in one-letter code: VIP36-like protein (348 aa).

The N-terminal stretch at 1 to 38 (MAVALGPSGWWQRWRRRLSAREVSRMLLLLLLLGSGQG) is a signal peptide. Residues 39-313 (PRQVGAGQTF…APLPPLSGLA (275 aa)) lie on the Lumenal side of the membrane. Residues 49–274 (EYLKREHSLS…DVISLKLFEL (226 aa)) form the L-type lectin-like domain. 2 residues coordinate a carbohydrate: Ser93 and Asp128. Positions 159, 161, and 163 each coordinate Ca(2+). A carbohydrate contacts are provided by Tyr161 and Asn163. An N-linked (GlcNAc...) asparagine glycan is attached at Asn181. His188 contacts a carbohydrate. Residue Asp191 coordinates Ca(2+). A disulfide bridge connects residues Cys200 and Cys237. 258 to 260 (GDL) lines the a carbohydrate pocket. The chain crosses the membrane as a helical span at residues 314–334 (LFLIVFFSLVFSVFAIVIGII). Residues 335–348 (LYNKWQDQSRKRFY) lie on the Cytoplasmic side of the membrane. An Endoplasmic reticulum retention signal motif is present at residues 344–346 (RKR).

Its subcellular location is the endoplasmic reticulum membrane. It is found in the golgi apparatus membrane. Its function is as follows. May be involved in the regulation of export from the endoplasmic reticulum of a subset of glycoproteins. May function as a regulator of ERGIC-53. The polypeptide is VIP36-like protein (LMAN2L) (Bos taurus (Bovine)).